The following is a 559-amino-acid chain: Probable 2-ketoarginine decarboxylase AruI (559 aa).

Thiamine diphosphate is bound at residue E76.

The protein belongs to the TPP enzyme family. Thiamine diphosphate serves as cofactor.

The enzyme catalyses 5-guanidino-2-oxopentanoate + H(+) = 4-guanidinobutanal + CO2. It functions in the pathway amino-acid degradation; L-arginine degradation. Catalyzes the decarboxylation of 2-ketoarginine, leading to the formation of 4-guanidinobutyraldehyde. In Pseudomonas aeruginosa (strain ATCC 15692 / DSM 22644 / CIP 104116 / JCM 14847 / LMG 12228 / 1C / PRS 101 / PAO1), this protein is Probable 2-ketoarginine decarboxylase AruI (aruI).